The chain runs to 188 residues: Elongation factor P (188 aa).

This sequence belongs to the elongation factor P family.

It is found in the cytoplasm. The protein operates within protein biosynthesis; polypeptide chain elongation. In terms of biological role, involved in peptide bond synthesis. Stimulates efficient translation and peptide-bond synthesis on native or reconstituted 70S ribosomes in vitro. Probably functions indirectly by altering the affinity of the ribosome for aminoacyl-tRNA, thus increasing their reactivity as acceptors for peptidyl transferase. This is Elongation factor P from Leptospira borgpetersenii serovar Hardjo-bovis (strain JB197).